The sequence spans 709 residues: Elongation factor G (709 aa).

Residues 9 to 296 (AKVRNIGIMA…AVVRYLPSPL (288 aa)) enclose the tr-type G domain. GTP contacts are provided by residues 18 to 25 (AHIDAGKT), 86 to 90 (DTPGH), and 140 to 143 (NKLD).

The protein belongs to the TRAFAC class translation factor GTPase superfamily. Classic translation factor GTPase family. EF-G/EF-2 subfamily.

Its subcellular location is the cytoplasm. Its function is as follows. Catalyzes the GTP-dependent ribosomal translocation step during translation elongation. During this step, the ribosome changes from the pre-translocational (PRE) to the post-translocational (POST) state as the newly formed A-site-bound peptidyl-tRNA and P-site-bound deacylated tRNA move to the P and E sites, respectively. Catalyzes the coordinated movement of the two tRNA molecules, the mRNA and conformational changes in the ribosome. This chain is Elongation factor G, found in Streptomyces griseus subsp. griseus (strain JCM 4626 / CBS 651.72 / NBRC 13350 / KCC S-0626 / ISP 5235).